The sequence spans 33 residues: Photosystem II reaction center protein Psb30 (33 aa).

The helical transmembrane segment at 5–25 (ILSQLIAIAVTLFLGPVVVIL) threads the bilayer.

The protein belongs to the Psb30/Ycf12 family. In terms of assembly, PSII is composed of 1 copy each of membrane proteins PsbA, PsbB, PsbC, PsbD, PsbE, PsbF, PsbH, PsbI, PsbJ, PsbK, PsbL, PsbM, PsbT, PsbX, PsbY, PsbZ, Psb30/Ycf12, peripheral proteins of the oxygen-evolving complex and a large number of cofactors. It forms dimeric complexes.

It is found in the plastid. The protein localises to the chloroplast thylakoid membrane. In terms of biological role, a core subunit of photosystem II (PSII), probably helps stabilize the reaction center. The protein is Photosystem II reaction center protein Psb30 of Oedogonium cardiacum (Filamentous green alga).